The sequence spans 136 residues: ATP synthase epsilon chain (136 aa).

The protein belongs to the ATPase epsilon chain family. In terms of assembly, F-type ATPases have 2 components, CF(1) - the catalytic core - and CF(0) - the membrane proton channel. CF(1) has five subunits: alpha(3), beta(3), gamma(1), delta(1), epsilon(1). CF(0) has three main subunits: a, b and c.

The protein localises to the cell inner membrane. Produces ATP from ADP in the presence of a proton gradient across the membrane. In Persephonella marina (strain DSM 14350 / EX-H1), this protein is ATP synthase epsilon chain.